A 447-amino-acid chain; its full sequence is Aladin (447 aa).

The interval 49–69 (STPSSLQENEGQENGDKASGE) is disordered. WD repeat units lie at residues 97–138 (LSEI…EPCI), 142–181 (DSQR…NMAL), 210–250 (QNDE…GTPI), and 252–291 (RGLG…SEPW).

As to quaternary structure, part of the nuclear pore complex (NPC). The NPC has an eight-fold symmetrical structure comprising a central transport channel and two rings, the cytoplasmic and nuclear rings, to which eight filaments are attached. The cytoplasmic filaments have loose ends, while the nuclear filaments are joined in a distal ring, forming a nuclear basket. NPCs are highly dynamic in configuration and composition, and can be devided in 3 subcomplexes, the NUP62 subcomplex, the NUP107-160 subcomplex and the NUP93 subcomplex, containing approximately 30 different nucleoporin proteins.

The protein resides in the nucleus envelope. It is found in the nucleus. Its subcellular location is the nuclear pore complex. In Arabidopsis thaliana (Mouse-ear cress), this protein is Aladin.